The chain runs to 807 residues: F-box protein YLR352W (807 aa).

The F-box domain occupies Leu-220 to Leu-266. Positions Asp-607 to Gln-616 are enriched in basic and acidic residues. 2 disordered regions span residues Asp-607–Ala-647 and His-716–Ser-739. Polar residues-rich tracts occupy residues Ser-627 to Asn-644 and Ser-723 to Glu-736.

As to quaternary structure, interacts with SKP1 and CDC53. Component of the probable SCF(YBR352W) complex containing CDC53, SKP1, RBX1 and YBR352W.

It functions in the pathway protein modification; protein ubiquitination. Substrate recognition component of a SCF (SKP1-CUL1-F-box protein) E3 ubiquitin-protein ligase complex which mediates the ubiquitination and subsequent proteasomal degradation of target proteins. Probably recognizes and binds to phosphorylated target proteins. The protein is F-box protein YLR352W of Saccharomyces cerevisiae (strain ATCC 204508 / S288c) (Baker's yeast).